The chain runs to 442 residues: Chromosomal replication initiator protein DnaA (442 aa).

The interval M1–A84 is domain I, interacts with DnaA modulators. Residues A84 to N105 form a domain II region. Residues N106–A322 are domain III, AAA+ region. ATP-binding residues include G150, G152, K153, and T154. Positions Q323–N442 are domain IV, binds dsDNA.

It belongs to the DnaA family. In terms of assembly, oligomerizes as a right-handed, spiral filament on DNA at oriC.

The protein resides in the cytoplasm. In terms of biological role, plays an essential role in the initiation and regulation of chromosomal replication. ATP-DnaA binds to the origin of replication (oriC) to initiate formation of the DNA replication initiation complex once per cell cycle. Binds the DnaA box (a 9 base pair repeat at the origin) and separates the double-stranded (ds)DNA. Forms a right-handed helical filament on oriC DNA; dsDNA binds to the exterior of the filament while single-stranded (ss)DNA is stabiized in the filament's interior. The ATP-DnaA-oriC complex binds and stabilizes one strand of the AT-rich DNA unwinding element (DUE), permitting loading of DNA polymerase. After initiation quickly degrades to an ADP-DnaA complex that is not apt for DNA replication. Binds acidic phospholipids. The chain is Chromosomal replication initiator protein DnaA from Methylococcus capsulatus (strain ATCC 33009 / NCIMB 11132 / Bath).